A 348-amino-acid polypeptide reads, in one-letter code: UDP-N-acetylglucosamine--N-acetylmuramyl-(pentapeptide) pyrophosphoryl-undecaprenol N-acetylglucosamine transferase (348 aa).

UDP-N-acetyl-alpha-D-glucosamine contacts are provided by residues 11–13, Asn-120, Arg-161, Ser-187, and Gln-281; that span reads TGG.

Belongs to the glycosyltransferase 28 family. MurG subfamily.

The protein localises to the cell inner membrane. The enzyme catalyses di-trans,octa-cis-undecaprenyl diphospho-N-acetyl-alpha-D-muramoyl-L-alanyl-D-glutamyl-meso-2,6-diaminopimeloyl-D-alanyl-D-alanine + UDP-N-acetyl-alpha-D-glucosamine = di-trans,octa-cis-undecaprenyl diphospho-[N-acetyl-alpha-D-glucosaminyl-(1-&gt;4)]-N-acetyl-alpha-D-muramoyl-L-alanyl-D-glutamyl-meso-2,6-diaminopimeloyl-D-alanyl-D-alanine + UDP + H(+). Its pathway is cell wall biogenesis; peptidoglycan biosynthesis. Cell wall formation. Catalyzes the transfer of a GlcNAc subunit on undecaprenyl-pyrophosphoryl-MurNAc-pentapeptide (lipid intermediate I) to form undecaprenyl-pyrophosphoryl-MurNAc-(pentapeptide)GlcNAc (lipid intermediate II). This chain is UDP-N-acetylglucosamine--N-acetylmuramyl-(pentapeptide) pyrophosphoryl-undecaprenol N-acetylglucosamine transferase, found in Crocosphaera subtropica (strain ATCC 51142 / BH68) (Cyanothece sp. (strain ATCC 51142)).